Here is a 481-residue protein sequence, read N- to C-terminus: G-protein coupled receptor 37-like 1 (481 aa).

An N-terminal signal peptide occupies residues 1 to 25; that stretch reads MRWLWPLAVSLAVILAVGLSRVSGG. 2 disordered regions span residues 26-58 and 70-108; these read APLH…GVQQ and PIHP…NLTG. The Extracellular segment spans residues 26–134; sequence APLHLGRHRA…ESSYSAYAIM (109 aa). T79 and T85 each carry an O-linked (GalNAc...) threonine glycan. O-linked (GalNAc...) serine glycosylation occurs at S86. Residue T95 is glycosylated (O-linked (GalNAc...) threonine). N105 is a glycosylation site (N-linked (GlcNAc...) asparagine). T107 is a glycosylation site (O-linked (GalNAc...) threonine). The helical transmembrane segment at 135–155 threads the bilayer; the sequence is LLALVVFAVGIVGNLSVMCIV. Residues 156 to 167 lie on the Cytoplasmic side of the membrane; that stretch reads WHSYYLKSAWNS. The helical transmembrane segment at 168–188 threads the bilayer; it reads ILASLALWDFLVLFFCLPIVI. Topologically, residues 189 to 205 are extracellular; it reads FNEITKQRLLGDVSCRA. Cysteines 203 and 286 form a disulfide. The chain crosses the membrane as a helical span at residues 206-226; the sequence is VPFMEVSSLGVTTFSLCALGI. Topologically, residues 227 to 251 are cytoplasmic; that stretch reads DRFHVATSTLPKVRPIERCQSILAK. The chain crosses the membrane as a helical span at residues 252-272; the sequence is LAVIWVGSMTLAVPELLLWQL. Topologically, residues 273-310 are extracellular; sequence AQEPAPTMGTLDSCIMKPSASLPESLYSLVMTYQNARM. Residues 311 to 331 traverse the membrane as a helical segment; sequence WWYFGCYFCLPILFTVTCQLV. Residues 332–361 are Cytoplasmic-facing; sequence TWRVRGPPGRKSECRASKHEQCESQLNSTV. The helical transmembrane segment at 362–382 threads the bilayer; the sequence is VGLTVVYAFCTLPENVCNIVV. Residues 383-398 are Extracellular-facing; that stretch reads AYLSTELTRQTLDLLG. Residues 399–419 traverse the membrane as a helical segment; sequence LINQFSTFFKGAITPVLLLCI. Residues 420–481 lie on the Cytoplasmic side of the membrane; sequence CRPLGQAFLD…PPLLPLGTPC (62 aa). S471 bears the Phosphoserine mark. At T479 the chain carries Phosphothreonine.

Belongs to the G-protein coupled receptor 1 family. As to quaternary structure, interacts with the PTCH1 receptor. Post-translationally, O-glycosylated. Undergoes metalloprotease-mediated cleavage which reduces its constitutive activity. In terms of processing, ubiquitinated. Expressed in primary cortical astrocytes (at protein level). Expressed in the central nervous system.

The protein resides in the cell membrane. The protein localises to the cell projection. It localises to the cilium membrane. Functionally, G-protein coupled receptor. Has been shown to bind the neuroprotective and glioprotective factor prosaposin (PSAP), leading to endocytosis followed by an ERK phosphorylation cascade. However, other studies have shown that prosaposin does not increase activity. It has been suggested that GPR37L1 is a constitutively active receptor which signals through the guanine nucleotide-binding protein G(s) subunit alpha. Participates in the regulation of postnatal cerebellar development by modulating the Shh pathway. Regulates baseline blood pressure in females and protects against cardiovascular stress in males. Mediates inhibition of astrocyte glutamate transporters and reduction in neuronal N-methyl-D-aspartate receptor activity. The sequence is that of G-protein coupled receptor 37-like 1 (GPR37L1) from Homo sapiens (Human).